The primary structure comprises 223 residues: Na(+)-translocating NADH-quinone reductase subunit D (223 aa).

Transmembrane regions (helical) follow at residues 42 to 62, 66 to 86, 103 to 123, 131 to 151, and 178 to 198; these read TVMA…ISMI, IPSS…VIVV, VFVG…AFAM, FFDG…LGFI, and NGLL…IWAL.

This sequence belongs to the NqrDE/RnfAE family. In terms of assembly, composed of six subunits; NqrA, NqrB, NqrC, NqrD, NqrE and NqrF.

It localises to the cell inner membrane. The catalysed reaction is a ubiquinone + n Na(+)(in) + NADH + H(+) = a ubiquinol + n Na(+)(out) + NAD(+). NQR complex catalyzes the reduction of ubiquinone-1 to ubiquinol by two successive reactions, coupled with the transport of Na(+) ions from the cytoplasm to the periplasm. NqrA to NqrE are probably involved in the second step, the conversion of ubisemiquinone to ubiquinol. The polypeptide is Na(+)-translocating NADH-quinone reductase subunit D (Pseudomonas paraeruginosa (strain DSM 24068 / PA7) (Pseudomonas aeruginosa (strain PA7))).